We begin with the raw amino-acid sequence, 274 residues long: Large ribosomal subunit protein uL2c (274 aa).

Disordered stretches follow at residues 1–22 (MAIH…DNQV) and 225–274 (PVDH…RRSK).

It belongs to the universal ribosomal protein uL2 family. In terms of assembly, part of the 50S ribosomal subunit.

The protein resides in the plastid. Its subcellular location is the chloroplast. This chain is Large ribosomal subunit protein uL2c (rpl2), found in Silene latifolia (White campion).